Consider the following 70-residue polypeptide: Conotoxin Pl171 (70 aa).

The N-terminal stretch at 1–21 (MGMRMMFTMILLVVLVTTVVS) is a signal peptide. 2 cysteine pairs are disulfide-bonded: C54–C61 and C55–C67. At F69 the chain carries Phenylalanine amide.

The protein belongs to the conotoxin A superfamily. As to expression, expressed by the venom duct.

It is found in the secreted. Its function is as follows. Probable neurotoxin with unknown target. Possibly targets ion channels. The protein is Conotoxin Pl171 of Conus planorbis (Planorbis cone).